Consider the following 365-residue polypeptide: UDP-N-acetylglucosamine--N-acetylmuramyl-(pentapeptide) pyrophosphoryl-undecaprenol N-acetylglucosamine transferase (365 aa).

Residues 10-12, asparagine 128, arginine 170, serine 199, isoleucine 250, and glutamine 295 contribute to the UDP-N-acetyl-alpha-D-glucosamine site; that span reads TGG.

This sequence belongs to the glycosyltransferase 28 family. MurG subfamily.

The protein resides in the cell inner membrane. The enzyme catalyses di-trans,octa-cis-undecaprenyl diphospho-N-acetyl-alpha-D-muramoyl-L-alanyl-D-glutamyl-meso-2,6-diaminopimeloyl-D-alanyl-D-alanine + UDP-N-acetyl-alpha-D-glucosamine = di-trans,octa-cis-undecaprenyl diphospho-[N-acetyl-alpha-D-glucosaminyl-(1-&gt;4)]-N-acetyl-alpha-D-muramoyl-L-alanyl-D-glutamyl-meso-2,6-diaminopimeloyl-D-alanyl-D-alanine + UDP + H(+). It participates in cell wall biogenesis; peptidoglycan biosynthesis. In terms of biological role, cell wall formation. Catalyzes the transfer of a GlcNAc subunit on undecaprenyl-pyrophosphoryl-MurNAc-pentapeptide (lipid intermediate I) to form undecaprenyl-pyrophosphoryl-MurNAc-(pentapeptide)GlcNAc (lipid intermediate II). The chain is UDP-N-acetylglucosamine--N-acetylmuramyl-(pentapeptide) pyrophosphoryl-undecaprenol N-acetylglucosamine transferase from Pelodictyon phaeoclathratiforme (strain DSM 5477 / BU-1).